A 766-amino-acid polypeptide reads, in one-letter code: Leucine-rich repeat and fibronectin type III domain-containing protein 1 (766 aa).

An N-terminal signal peptide occupies residues 1–31; the sequence is MAPGPFSSGLLSPPPAALPFLLLLWAGASRG. Residues 32–65 enclose the LRRNT domain; the sequence is QPCPGRCICQNVAPTLTMLCAKTGLLFVPPAIDR. The Extracellular portion of the chain corresponds to 32 to 536; that stretch reads QPCPGRCICQ…LRAHFLGGTM (505 aa). LRR repeat units lie at residues 66-87, 90-111, 114-135, 138-159, 163-184, 187-208, and 211-232; these read RVVELRLTDNFIAAVRRRDFAN, SLVHLTLSRNTIGQVAAGAFAD, ALRALHLDSNRLAEVRGDQLRG, NLRHLILGNNQIRKVESAAFDA, TVEDLDLSYNNLEALPWEAVGQ, NLNTLTLDHNLIDHIAEGTFVQ, and KLVRLDMTSNRLHKLPPDGLFL. N87 carries an N-linked (GlcNAc...) asparagine glycan. In terms of domain architecture, LRRCT spans 252-298; it reads NPLHCNCELLWLRRLTREDDLETCATPEHLTDRYFWSIPEEEFLCEP. An Ig-like domain is found at 299 to 386; that stretch reads PLITRQAGGR…GEATAPVEVC (88 aa). C321 and C370 are disulfide-bonded. A glycan (N-linked (GlcNAc...) asparagine) is linked at N343. Residues 397–422 form a disordered region; it reads PAAPPPLTEPGSSDIATPGRPGANDS. One can recognise a Fibronectin type-III domain in the interval 424 to 520; the sequence is TERRLVAAEL…GCVQFTTAGD (97 aa). The helical transmembrane segment at 537 to 557 threads the bilayer; it reads IIAIGGVIVASVLVFIVLLMI. Topologically, residues 558–766 are cytoplasmic; sequence RYKVYGDGDS…STEWMLESTV (209 aa). Disordered stretches follow at residues 568–601 and 646–742; these read RRIKGTSRSPPRVSHVCSQTNGSSAQQASAPPAP and CLLP…GEDG. S713 is modified (phosphoserine). Over residues 714 to 727 the composition is skewed to basic residues; the sequence is YPRRARRTKRHRST.

It belongs to the LRFN family. Forms heteromeric complexes with LRFN2, LRFN4 and LRFN5; binding to LRFN2 and LRFN5 may be weaker than that to LRFN4. Also interacts with LRFN3. Forms homomeric complexes, but not across cell junctions. Interacts with DLG1, DLG2 and DLG4, but not with MAGI2, not CASK. Interacts with DLG3. Interacts with 2 AMPA receptor subunits GRIA1 and GRIA2 and NMDA receptor subunit GRIN1. Post-translationally, glycosylated. In terms of tissue distribution, mainly expressed in brain (at protein level) and testis. In brain, found in cerebral cortex (including pyramidal neurons), hippocampus (including CA3 and CA1 neurons), dentate gyrus, cerebellum (including Purkinje neurons) (at protein level) (at protein level). Also expressed in the olfactory bulb.

The protein localises to the membrane. It localises to the synapse. The protein resides in the postsynaptic density membrane. Its function is as follows. Promotes neurite outgrowth in hippocampal neurons. Involved in the regulation of the differentiation and maintenance of excitatory synapses. Induces the clustering of excitatory postsynaptic proteins, including DLG4, DLGAP1, GRIA1 and GRIN1. The protein is Leucine-rich repeat and fibronectin type III domain-containing protein 1 (Lrfn1) of Rattus norvegicus (Rat).